We begin with the raw amino-acid sequence, 295 residues long: Acetyl-coenzyme A carboxylase carboxyl transferase subunit beta (295 aa).

The tract at residues Met1–Lys20 is disordered. The CoA carboxyltransferase N-terminal domain maps to Leu28 to Ala295. Zn(2+) is bound by residues Cys32, Cys35, Cys51, and Cys54. The C4-type zinc-finger motif lies at Cys32 to Cys54.

The protein belongs to the AccD/PCCB family. In terms of assembly, acetyl-CoA carboxylase is a heterohexamer composed of biotin carboxyl carrier protein (AccB), biotin carboxylase (AccC) and two subunits each of ACCase subunit alpha (AccA) and ACCase subunit beta (AccD). Zn(2+) is required as a cofactor.

Its subcellular location is the cytoplasm. The enzyme catalyses N(6)-carboxybiotinyl-L-lysyl-[protein] + acetyl-CoA = N(6)-biotinyl-L-lysyl-[protein] + malonyl-CoA. It participates in lipid metabolism; malonyl-CoA biosynthesis; malonyl-CoA from acetyl-CoA: step 1/1. Functionally, component of the acetyl coenzyme A carboxylase (ACC) complex. Biotin carboxylase (BC) catalyzes the carboxylation of biotin on its carrier protein (BCCP) and then the CO(2) group is transferred by the transcarboxylase to acetyl-CoA to form malonyl-CoA. This chain is Acetyl-coenzyme A carboxylase carboxyl transferase subunit beta, found in Xanthomonas oryzae pv. oryzae (strain MAFF 311018).